The chain runs to 198 residues: Large ribosomal subunit protein bL25 (198 aa).

Belongs to the bacterial ribosomal protein bL25 family. CTC subfamily. In terms of assembly, part of the 50S ribosomal subunit; part of the 5S rRNA/L5/L18/L25 subcomplex. Contacts the 5S rRNA. Binds to the 5S rRNA independently of L5 and L18.

In terms of biological role, this is one of the proteins that binds to the 5S RNA in the ribosome where it forms part of the central protuberance. This Chlorobium phaeobacteroides (strain DSM 266 / SMG 266 / 2430) protein is Large ribosomal subunit protein bL25.